We begin with the raw amino-acid sequence, 185 residues long: Ribosome-recycling factor (185 aa).

It belongs to the RRF family.

Its subcellular location is the cytoplasm. Functionally, responsible for the release of ribosomes from messenger RNA at the termination of protein biosynthesis. May increase the efficiency of translation by recycling ribosomes from one round of translation to another. This is Ribosome-recycling factor from Actinobacillus succinogenes (strain ATCC 55618 / DSM 22257 / CCUG 43843 / 130Z).